Here is a 475-residue protein sequence, read N- to C-terminus: Protein ABCI7, chloroplastic (475 aa).

A chloroplast-targeting transit peptide spans methionine 1–arginine 36.

In terms of assembly, interacts with NAP7.

Its subcellular location is the plastid. The protein localises to the chloroplast. This is Protein ABCI7, chloroplastic (ABCI7) from Arabidopsis thaliana (Mouse-ear cress).